Here is a 591-residue protein sequence, read N- to C-terminus: NADP-dependent malic enzyme (591 aa).

Residue Tyr139 is the Proton donor of the active site. Arg192 serves as a coordination point for NAD(+). Lys210 acts as the Proton acceptor in catalysis. A divalent metal cation is bound by residues Glu282, Asp283, and Asp306. Asp306 contributes to the NAD(+) binding site. NADP(+) is bound at residue 335–351 (LFLGAGEAGTGIAELIA). Residue Asn447 coordinates NAD(+).

The protein belongs to the malic enzymes family. In terms of assembly, homotetramer. It depends on Mg(2+) as a cofactor. Requires Mn(2+) as cofactor.

It is found in the cytoplasm. It carries out the reaction (S)-malate + NADP(+) = pyruvate + CO2 + NADPH. The enzyme catalyses oxaloacetate + H(+) = pyruvate + CO2. The protein is NADP-dependent malic enzyme of Vitis vinifera (Grape).